Here is a 144-residue protein sequence, read N- to C-terminus: MLQNTSRFLARAGATVGVAAGLAFSLPADRDGAPGVTVTPATGLSNGQTVTVSATGLTPGTVYHVGQCAVVEPGVIGCDATTSTDVTADAAGKITAQLKVHSSFQAVVGANGTPWGTVNCKVVSCSAGLGSDSGEGAAQAITFA.

Residues 1-32 form the signal peptide; sequence MLQNTSRFLARAGATVGVAAGLAFSLPADRDG. Intrachain disulfides connect cysteine 68-cysteine 78 and cysteine 120-cysteine 125.

This sequence belongs to the neocarzinostatin family.

In terms of biological role, binds non-covalently to a chromophore which is the cytotoxic and mutagenic component of the antibiotic. The chromophore binds to DNA as a weak intercalator and causes single- and double-strand breaks. This Streptomyces macromomyceticus protein is Macromomycin.